The primary structure comprises 195 residues: Holliday junction branch migration complex subunit RuvA (195 aa).

The interval 1-62 (MIEFVKGPVA…EDQQTLYGFR (62 aa)) is domain I. The tract at residues 63-141 (SRRERELFNK…ELAPDYVPNE (79 aa)) is domain II. The segment at 141–145 (EGLFA) is flexible linker. The tract at residues 146–195 (QGASELDEACEALVALGYSEREIAKVRKALSGEILTTDAYIKRALQLLLK) is domain III.

It belongs to the RuvA family. In terms of assembly, homotetramer. Forms an RuvA(8)-RuvB(12)-Holliday junction (HJ) complex. HJ DNA is sandwiched between 2 RuvA tetramers; dsDNA enters through RuvA and exits via RuvB. An RuvB hexamer assembles on each DNA strand where it exits the tetramer. Each RuvB hexamer is contacted by two RuvA subunits (via domain III) on 2 adjacent RuvB subunits; this complex drives branch migration. In the full resolvosome a probable DNA-RuvA(4)-RuvB(12)-RuvC(2) complex forms which resolves the HJ.

It localises to the cytoplasm. Its function is as follows. The RuvA-RuvB-RuvC complex processes Holliday junction (HJ) DNA during genetic recombination and DNA repair, while the RuvA-RuvB complex plays an important role in the rescue of blocked DNA replication forks via replication fork reversal (RFR). RuvA specifically binds to HJ cruciform DNA, conferring on it an open structure. The RuvB hexamer acts as an ATP-dependent pump, pulling dsDNA into and through the RuvAB complex. HJ branch migration allows RuvC to scan DNA until it finds its consensus sequence, where it cleaves and resolves the cruciform DNA. The sequence is that of Holliday junction branch migration complex subunit RuvA from Exiguobacterium sp. (strain ATCC BAA-1283 / AT1b).